Consider the following 235-residue polypeptide: Regulator of G-protein signaling 9-binding protein (235 aa).

At 1–210 the chain is on the cytoplasmic side; the sequence is MAREECKALL…ERGGGCDPRK (210 aa). 2 coiled-coil regions span residues 29–54 and 144–169; these read GSAD…AVST and VADL…MKVN. The segment at 153–200 is SNARE-like; it reads EVLQVGEMIDNMEMKVNVPRWTVQARQAAGAELLSTVSAGPSSVVSLQ. Residues 211–231 form a helical; Anchor for type IV membrane protein membrane-spanning segment; the sequence is ALAAILFGAVLLAAVALAVCV. The Extracellular segment spans residues 232-235; it reads AKLS.

This sequence belongs to the RGS7BP/RGS9BP family. Specifically interacts with isoform RGS9-1 of RGS9. Component of the RGS9-1-Gbeta5 complex composed of RGS9-1, Gbeta5 (GNB5) and RGS9BP.

The protein resides in the membrane. In terms of biological role, regulator of G protein-coupled receptor (GPCR) signaling in phototransduction. Participates in the recovery phase of visual transduction via its interaction with RGS9-1 isoform. Acts as a membrane-anchor that mediates the targeting of RGS9-1 to the photoreceptor outer segment, where phototransduction takes place. Enhances the ability of RGS9-1 to stimulate G protein GTPase activity, allowing the visual signal to be terminated on the physiologically time scale. It also controls the proteolytic stability of RGS9-1, probably by protecting it from degradation. The polypeptide is Regulator of G-protein signaling 9-binding protein (RGS9BP) (Homo sapiens (Human)).